The chain runs to 103 residues: Small ribosomal subunit protein uS10 (103 aa).

Belongs to the universal ribosomal protein uS10 family. In terms of assembly, part of the 30S ribosomal subunit.

Involved in the binding of tRNA to the ribosomes. This Marinomonas sp. (strain MWYL1) protein is Small ribosomal subunit protein uS10.